The chain runs to 275 residues: MALIKVKPTSAGRRAVVKVVTPGLHKGKPLAALLEPKKRGSGRNNNGHITVRHKGGGHKQHYRVVDFRRNKDGIPAKVERIEYDPNRSAHLALLCYADGERRYIIAPRGIAVGAQLVNGVEAPIKAGNCLPLRSIPVGSTVHCVEMMPGKGAQIARSAGTSVQLLAREGSYAQLRLRSGEIRKVHVDCRATLGECGNEEHSLRSIGKAGASRWRGIRPTVRGVVMNPVDHPHGGGEGRTAAGRHPVSPWGTPTKGYRTRSNKRTSNMIVRRRHAR.

Disordered stretches follow at residues 36-55 (PKKRGSGRNNNGHITVRHKG) and 223-275 (VVMN…RHAR).

Belongs to the universal ribosomal protein uL2 family. As to quaternary structure, part of the 50S ribosomal subunit. Forms a bridge to the 30S subunit in the 70S ribosome.

Functionally, one of the primary rRNA binding proteins. Required for association of the 30S and 50S subunits to form the 70S ribosome, for tRNA binding and peptide bond formation. It has been suggested to have peptidyltransferase activity; this is somewhat controversial. Makes several contacts with the 16S rRNA in the 70S ribosome. The chain is Large ribosomal subunit protein uL2 from Thiobacillus denitrificans (strain ATCC 25259 / T1).